A 72-amino-acid polypeptide reads, in one-letter code: Translation initiation factor IF-1 (72 aa).

The S1-like domain occupies 1–72 (MSKEDAIEVM…TRGRIVYRYK (72 aa)).

Belongs to the IF-1 family. Component of the 30S ribosomal translation pre-initiation complex which assembles on the 30S ribosome in the order IF-2 and IF-3, IF-1 and N-formylmethionyl-tRNA(fMet); mRNA recruitment can occur at any time during PIC assembly.

The protein resides in the cytoplasm. One of the essential components for the initiation of protein synthesis. Stabilizes the binding of IF-2 and IF-3 on the 30S subunit to which N-formylmethionyl-tRNA(fMet) subsequently binds. Helps modulate mRNA selection, yielding the 30S pre-initiation complex (PIC). Upon addition of the 50S ribosomal subunit IF-1, IF-2 and IF-3 are released leaving the mature 70S translation initiation complex. This Koribacter versatilis (strain Ellin345) protein is Translation initiation factor IF-1.